The primary structure comprises 396 residues: MTTNTVSRKVAWLRVVTLAVAAFIFNTTEFVPVGLLSDIAQSFHMQTAQVGIMLTIYAWVVALMSLPFMLMTSQVERRKLLICLFVVFIASHVLSFLSWSFTVLVISRIGVAFAHAIFWSITASLAIRMAPAGKRAQALSLIATGTALAMVLGLPLGRIVGQYFGWRMTFFAIGIGALITLLCLIKLLPLLPSEHSGSLKSLPLLFRRPALMSIYLLTVVVVTAHYTAYSYIEPFVQNIAGFSANFATALLLLLGGAGIIGSVIFGKLGNQYASALVSTAIALLLVCLALLLPAANSEIHLGVLSIFWGIAMMIIGLGMQVKVLALAPDATDVAMALFSGIFNIGIGAGALVGNQVSLHWSMSMIGYVGAVPAFAALIWSIIIFRRWPVTLEEQTQ.

A run of 12 helical transmembrane segments spans residues 15-35 (VVTL…PVGL), 50-70 (VGIM…PFML), 81-101 (LICL…SWSF), 103-123 (VLVI…SITA), 136-156 (AQAL…GLPL), 170-190 (FFAI…LLPL), 209-229 (PALM…YTAY), 246-266 (FATA…VIFG), 275-295 (ALVS…LPAA), 299-319 (IHLG…GLGM), 333-353 (VAMA…ALVG), and 364-384 (MIGY…IIIF).

It belongs to the major facilitator superfamily. SotB (TC 2.A.1.2) family.

The protein localises to the cell inner membrane. Functionally, involved in the efflux of sugars. The physiological role may be the reduction of the intracellular concentration of toxic sugars or sugar metabolites. In Escherichia coli O139:H28 (strain E24377A / ETEC), this protein is Probable sugar efflux transporter.